Reading from the N-terminus, the 389-residue chain is Major outer membrane porin (389 aa).

Residues 1 to 23 (MKKLLKSALLSAAFAGSVGSLQA) form the signal peptide.

The protein belongs to the chlamydial porin (CP) (TC 1.B.2) family. As to quaternary structure, part of a disulfide cross-linked outer membrane complex (COMC) composed of the major outer membrane porin (MOMP), the small cysteine-rich protein (OmcA) and the large cysteine-rich periplasmic protein (OmcB).

It is found in the cell outer membrane. Its function is as follows. In elementary bodies (EBs, the infectious stage, which is able to survive outside the host cell) provides the structural integrity of the outer envelope through disulfide cross-links with the small cysteine-rich protein and the large cysteine-rich periplasmic protein. It has been described in publications as the Sarkosyl-insoluble COMC (Chlamydia outer membrane complex), and serves as the functional equivalent of peptidoglycan. In terms of biological role, permits diffusion of specific solutes through the outer membrane. This is Major outer membrane porin (ompA) from Chlamydia pneumoniae (Chlamydophila pneumoniae).